The primary structure comprises 863 residues: Linoleate 9S-lipoxygenase 1 (863 aa).

A PLAT domain is found at 32–158 (RDFTASLLDN…KYHYNRIFFA (127 aa)). The 703-residue stretch at 161-863 (SYLPSQMPEA…ARGIPNSISI (703 aa)) folds into the Lipoxygenase domain. A disordered region spans residues 204 to 244 (NDLGEPDRDNPRPVLGGSQKHPYPRRGRTGRIPTKKDPNSE). Fe cation contacts are provided by His518, His523, His709, Asn713, and Ile863.

The protein belongs to the lipoxygenase family. As to quaternary structure, monomer. Fe cation serves as cofactor.

Its subcellular location is the cytoplasm. It carries out the reaction (9Z,12Z)-octadecadienoate + O2 = (9S)-hydroperoxy-(10E,12Z)-octadecadienoate. It functions in the pathway lipid metabolism; oxylipin biosynthesis. Functionally, plant lipoxygenase may be involved in a number of diverse aspects of plant physiology including growth and development, pest resistance, and senescence or responses to wounding. This lipoxygenase introduces molecular oxygen exclusively into the C-9 position of linoleic and linolenic. This Oryza sativa subsp. japonica (Rice) protein is Linoleate 9S-lipoxygenase 1.